The following is a 523-amino-acid chain: Keratin, type II cytoskeletal 71 (523 aa).

Residues Met-1 to Gln-129 form a head region. Residues Glu-130–Leu-165 form a coil 1A region. Positions Glu-130–Met-443 constitute an IF rod domain. Residues Gln-166–Tyr-184 form a linker 1 region. Residues Ile-185–Ile-276 are coil 1B. The segment at Gln-277–Ile-300 is linker 12. The interval Ile-301–Glu-439 is coil 2. The tract at residues Glu-440 to Arg-523 is tail. Residues Gly-492–Arg-523 are disordered. Basic and acidic residues predominate over residues Gly-493–Leu-508. The span at Lys-510–Arg-523 shows a compositional bias: polar residues.

The protein belongs to the intermediate filament family. In terms of assembly, heterodimer of a type I and a type II keratin. Associates with KRT16 and/or KRT17. In terms of tissue distribution, highly expressed in hair follicles from scalp. Specifically expressed in the inner root sheath (IRS) of the hair follicle. Present in the all 3 IRS layers: the cuticle, the Henle and the Huxley layers. Also detected in the pseudopods of specialized Huxley cells, termed Fluegelzellen, along the area of differentiated Henle cells (at protein level).

It localises to the cytoplasm. It is found in the cytoskeleton. Plays a central role in hair formation. Essential component of keratin intermediate filaments in the inner root sheath (IRS) of the hair follicle. This Homo sapiens (Human) protein is Keratin, type II cytoskeletal 71 (KRT71).